Here is a 151-residue protein sequence, read N- to C-terminus: Small ribosomal subunit protein uS15 (151 aa).

It belongs to the universal ribosomal protein uS15 family. Component of the small ribosomal subunit.

The protein localises to the cytoplasm. Its function is as follows. Component of the small ribosomal subunit. The ribosome is a large ribonucleoprotein complex responsible for the synthesis of proteins in the cell. The protein is Small ribosomal subunit protein uS15 (rps13) of Xenopus laevis (African clawed frog).